A 185-amino-acid chain; its full sequence is MEPPQCVEELEDDVFQSEDGEPGTQPGGLLSADLFAQSQLDCPLSRLQLFPLTHCCGPGLRPISQEDKATQTLSPASPSQGVMLPCGVTEEPQRLFYGNAGYRLPLPASFPAGSPLGEQPPEGQFLQHRAEVQIARKLQCIADQFHRLHTQQHQQNRDRAWWQVFLFLQNLALNRQENREGVGPW.

Residues 1–28 are disordered; it reads MEPPQCVEELEDDVFQSEDGEPGTQPGG. The span at 8–21 shows a compositional bias: acidic residues; the sequence is EELEDDVFQSEDGE. Residues 67-75 form an interaction with DLC2 region; the sequence is DKATQTLSP. Residues 134–148 carry the BH3 motif; that stretch reads IARKLQCIADQFHRL.

The protein belongs to the Bcl-2 family. In terms of assembly, interacts with MCL1, BCL2, BCL2L1/BCL-Xl, BCL2A1 and BCL2L2/BCL-w. Interacts with the myosin V actin motor complex through its binding to DLC2. As to expression, widely expressed with an abundant expression in pancreas, liver kidney and hematopoietic tissues.

In terms of biological role, may play a role in apoptosis. The polypeptide is Bcl-2-modifying factor (Bmf) (Mus musculus (Mouse)).